The sequence spans 457 residues: Aromatic amino acid transport protein AroP (457 aa).

At 1–18 the chain is on the cytoplasmic side; that stretch reads MMEGQQHGEQLKRGLKNR. Residues 19 to 39 traverse the membrane as a helical segment; the sequence is HIQLIALGGAIGTGLFLGSAS. Over 40–42 the chain is Periplasmic; sequence VIQ. A helical membrane pass occupies residues 43–63; sequence SAGPGIILGYAIAGFIAFLIM. Over 64–98 the chain is Cytoplasmic; the sequence is RQLGEMVVEEPVAGSFSHFAYKYWGSFAGFASGWN. Residues 99 to 119 form a helical membrane-spanning segment; it reads YWVLYVLVAMAELTAVGKYIQ. The Periplasmic segment spans residues 120 to 124; the sequence is FWYPE. A helical transmembrane segment spans residues 125-145; that stretch reads IPTWVSAAVFFVVINAINLTN. Residues 146 to 147 lie on the Cytoplasmic side of the membrane; the sequence is VK. Residues 148–168 form a helical membrane-spanning segment; the sequence is VFGEMEFWFAIIKVIAVVAMI. The Periplasmic segment spans residues 169-192; the sequence is IFGGWLLFSGNGGPQATVSNLWDQ. A helical transmembrane segment spans residues 193–213; the sequence is GGFLPHGFTGLVMMMAIIMFS. Residues 214-239 are Cytoplasmic-facing; it reads FGGLELVGITAAEADNPEQSIPKATN. Residues 240–260 form a helical membrane-spanning segment; sequence QVIYRILIFYIGSLAVLLSLM. Residues 261–279 lie on the Periplasmic side of the membrane; sequence PWTRVTADTSPFVLIFHEL. The helical transmembrane segment at 280–300 threads the bilayer; the sequence is GDTFVANALNIVVLTAALSVY. Residues 301-330 are Cytoplasmic-facing; the sequence is NSCVYCNSRMLFGLAQQGNAPKALASVDKR. Residues 331–351 form a helical membrane-spanning segment; it reads GVPVNTILVSALVTALCVLIN. Residues 352 to 359 lie on the Periplasmic side of the membrane; that stretch reads YLAPESAF. The helical transmembrane segment at 360-380 threads the bilayer; sequence GLLMALVVSALVINWAMISLA. The Cytoplasmic segment spans residues 381–402; it reads HMKFRRAKQEQGVVTRFPALLY. Residues 403-423 traverse the membrane as a helical segment; it reads PLGNWICLLFMAAVLVIMLMT. Residues 424-426 lie on the Periplasmic side of the membrane; sequence PGM. Residues 427–447 traverse the membrane as a helical segment; sequence AISVYLIPVWLIVLGIGYLFK. Topologically, residues 448-457 are cytoplasmic; that stretch reads EKTAKAVKAH.

This sequence belongs to the amino acid-polyamine-organocation (APC) superfamily. Amino acid transporter (AAT) (TC 2.A.3.1) family.

The protein resides in the cell inner membrane. The catalysed reaction is L-phenylalanine(in) + H(+)(in) = L-phenylalanine(out) + H(+)(out). It catalyses the reaction L-tryptophan(in) + H(+)(in) = L-tryptophan(out) + H(+)(out). The enzyme catalyses L-tyrosine(in) + H(+)(in) = L-tyrosine(out) + H(+)(out). Strong, mutual inhibition of uptake by tyrosine, phenylalanine, and tryptophan. Transport is also inhibited by the aromatic analogs p-fluorophenylalanine, beta-2-thienylalanine and 5-methyltryptophan. Functionally, permease that is involved in the active transport across the cytoplasmic membrane of all three aromatic amino acids, phenylalanine, tyrosine and tryptophan. In Escherichia coli (strain K12), this protein is Aromatic amino acid transport protein AroP.